A 371-amino-acid chain; its full sequence is Mannonate dehydratase (371 aa).

This sequence belongs to the mannonate dehydratase family. Fe(2+) serves as cofactor. Mn(2+) is required as a cofactor.

It carries out the reaction D-mannonate = 2-dehydro-3-deoxy-D-gluconate + H2O. It participates in carbohydrate metabolism; pentose and glucuronate interconversion. Catalyzes the dehydration of D-mannonate. The polypeptide is Mannonate dehydratase (Geobacillus thermodenitrificans (strain NG80-2)).